We begin with the raw amino-acid sequence, 1462 residues long: Gag-Pro-Pol polyprotein (1462 aa).

Gly2 carries the N-myristoyl glycine; by host lipid modification. The segment at 93–144 (QIPSRPAPPPPSSPTHDPPDSDPQIPPPYVEPTAPQVLPVMHPHGAPPNHRP) is disordered. Ser105 is modified (phosphoserine; by host MAPK1). A PPXY motif motif is present at residues 118–121 (PPPY). The PTAP/PSAP motif signature appears at 124–127 (PTAP). 2 CCHC-type zinc fingers span residues 355–372 (QPCF…DCTQ) and 378–395 (GPCP…DCPR). The 79-residue stretch at 476-554 (IEALLDTGAD…NNWAIIGRDA (79 aa)) folds into the Peptidase A2 domain. Asp481 (for protease activity; shared with dimeric partner) is an active-site residue. The Reverse transcriptase domain maps to 614–804 (LEAGHIEPYT…GTIKFLGQII (191 aa)). 9 residues coordinate Mg(2+): Asp680, Asp755, Asp756, Asp1040, Glu1074, Asp1096, Asp1157, Asp1230, and Asp1287. An RNase H type-1 domain is found at 1031 to 1165 (INTAPCLFSD…TDALLITPVL (135 aa)). The Integrase catalytic domain maps to 1219–1388 (RGLLPNHIWQ…QPIPETRSLS (170 aa)). Positions 1393–1443 (HWYYFKLPGLNSRQWKGPQEALQEAAGAALIPVSASSAQWIPWRLLKRAAC) form a DNA-binding region, integrase-type.

As to quaternary structure, homodimer; the homodimers are part of the immature particles. Interacts with human TSG101 and NEDD4; these interactions are essential for budding and release of viral particles. In terms of assembly, homodimer; further assembles as homohexamers. It depends on Mg(2+) as a cofactor. In terms of processing, phosphorylation of the matrix protein p19 by MAPK1 seems to play a role in budding. Post-translationally, myristoylated. Myristoylation of the matrix (MA) domain mediates the transport and binding of Gag polyproteins to the host plasma membrane and is required for the assembly of viral particles. Specific enzymatic cleavages by the viral protease yield mature proteins. The polyprotein is cleaved during and after budding, this process is termed maturation. The protease is autoproteolytically processed at its N- and C-termini.

It localises to the virion. It carries out the reaction Endonucleolytic cleavage to 5'-phosphomonoester.. The enzyme catalyses DNA(n) + a 2'-deoxyribonucleoside 5'-triphosphate = DNA(n+1) + diphosphate. The matrix domain targets Gag, Gag-Pro and Gag-Pro-Pol polyproteins to the plasma membrane via a multipartite membrane binding signal, that includes its myristoylated N-terminus. Its function is as follows. Matrix protein. In terms of biological role, forms the spherical core of the virus that encapsulates the genomic RNA-nucleocapsid complex. Functionally, binds strongly to viral nucleic acids and promote their aggregation. Also destabilizes the nucleic acids duplexes via highly structured zinc-binding motifs. The aspartyl protease mediates proteolytic cleavages of Gag and Gag-Pol polyproteins during or shortly after the release of the virion from the plasma membrane. Cleavages take place as an ordered, step-wise cascade to yield mature proteins. This process is called maturation. Displays maximal activity during the budding process just prior to particle release from the cell. Cleaves the translation initiation factor eIF4G leading to the inhibition of host cap-dependent translation. Its function is as follows. RT is a multifunctional enzyme that converts the viral RNA genome into dsDNA in the cytoplasm, shortly after virus entry into the cell. This enzyme displays a DNA polymerase activity that can copy either DNA or RNA templates, and a ribonuclease H (RNase H) activity that cleaves the RNA strand of RNA-DNA heteroduplexes in a partially processive 3' to 5'-endonucleasic mode. Conversion of viral genomic RNA into dsDNA requires many steps. A tRNA-Pro binds to the primer-binding site (PBS) situated at the 5'-end of the viral RNA. RT uses the 3' end of the tRNA primer to perform a short round of RNA-dependent minus-strand DNA synthesis. The reading proceeds through the U5 region and ends after the repeated (R) region which is present at both ends of viral RNA. The portion of the RNA-DNA heteroduplex is digested by the RNase H, resulting in a ssDNA product attached to the tRNA primer. This ssDNA/tRNA hybridizes with the identical R region situated at the 3' end of viral RNA. This template exchange, known as minus-strand DNA strong stop transfer, can be either intra- or intermolecular. RT uses the 3' end of this newly synthesized short ssDNA to perform the RNA-dependent minus-strand DNA synthesis of the whole template. RNase H digests the RNA template except for a polypurine tract (PPT) situated at the 5' end of the genome. It is not clear if both polymerase and RNase H activities are simultaneous. RNase H probably can proceed both in a polymerase-dependent (RNA cut into small fragments by the same RT performing DNA synthesis) and a polymerase-independent mode (cleavage of remaining RNA fragments by free RTs). Secondly, RT performs DNA-directed plus-strand DNA synthesis using the PPT that has not been removed by RNase H as primer. PPT and tRNA primers are then removed by RNase H. The 3' and 5' ssDNA PBS regions hybridize to form a circular dsDNA intermediate. Strand displacement synthesis by RT to the PBS and PPT ends produces a blunt ended, linear dsDNA copy of the viral genome that includes long terminal repeats (LTRs) at both ends. In terms of biological role, catalyzes viral DNA integration into the host chromosome, by performing a series of DNA cutting and joining reactions. In Homo sapiens (Human), this protein is Gag-Pro-Pol polyprotein (gag-pro-pol).